A 149-amino-acid polypeptide reads, in one-letter code: 3-hydroxyacyl-[acyl-carrier-protein] dehydratase FabZ (149 aa).

Residue H48 is part of the active site.

It belongs to the thioester dehydratase family. FabZ subfamily.

The protein localises to the cytoplasm. The catalysed reaction is a (3R)-hydroxyacyl-[ACP] = a (2E)-enoyl-[ACP] + H2O. Involved in unsaturated fatty acids biosynthesis. Catalyzes the dehydration of short chain beta-hydroxyacyl-ACPs and long chain saturated and unsaturated beta-hydroxyacyl-ACPs. This Thermomicrobium roseum (strain ATCC 27502 / DSM 5159 / P-2) protein is 3-hydroxyacyl-[acyl-carrier-protein] dehydratase FabZ.